Here is a 386-residue protein sequence, read N- to C-terminus: Phosphoglycerate kinase (386 aa).

Substrate-binding positions include 21–23 (DLN), Arg36, 59–62 (HLGR), Arg113, and Arg146. ATP is bound by residues Lys197, Glu314, and 340-343 (GGDT).

This sequence belongs to the phosphoglycerate kinase family. As to quaternary structure, monomer.

Its subcellular location is the cytoplasm. The catalysed reaction is (2R)-3-phosphoglycerate + ATP = (2R)-3-phospho-glyceroyl phosphate + ADP. Its pathway is carbohydrate degradation; glycolysis; pyruvate from D-glyceraldehyde 3-phosphate: step 2/5. The sequence is that of Phosphoglycerate kinase from Vibrio campbellii (strain ATCC BAA-1116).